The chain runs to 510 residues: MGCDGRVSELLRRNLQPTLTYWSVFFSFGLCIAFLGPTLLDLRCQTHSSLPQISWVFFSQQLCLLLGSALGGVFKRTLAQSLWALFTSTLVISLVFAVIPFCHDVKVLASVIALAGLAMGCIDTVANMQLVRIYQKDSAFFLQVLHFFVGLGALLSPLIADPFLSEANCFPANNTANATSRSHGSRVLSQHHAAAQPWINQTIPRLPPKEVTENHVSYAFWIMALINLPVPLAVLFLLSKERLLTCAQRKPLLLSADELALETRPAEKEDTSSLAPKFQPHSGQEDLFSCCQRKNFRGAPCSFFAIHITAALVLFMTDGMMGAYSAFVYSYAVEKPLSIGHKSAGYLPSLFWGFITLGRFISIPVSSRMRPATMVFINVVGVVVTFLMLLIFSYNVIFLFVGTASLGLFLSSTFPSMLAYTEDILQYKGCATTVLVTGAGIGEMVLQMLVGLIFQAQGSYSFLVCGVIFGCLAFIFYILLLFFHRIHPELSSVLTQDKALGVENPECYQR.

Helical transmembrane passes span 19–39 (LTYWSVFFSFGLCIAFLGPTL), 53–73 (ISWVFFSQQLCLLLGSALGGV), 82–102 (LWALFTSTLVISLVFAVIPFC), 107–127 (VLASVIALAGLAMGCIDTVAN), 139–159 (AFFLQVLHFFVGLGALLSPLI), 218–238 (YAFWIMALINLPVPLAVLFLL), 303–323 (FFAIHITAALVLFMTDGMMGA), 345–365 (GYLPSLFWGFITLGRFISIPV), 380–400 (VGVVVTFLMLLIFSYNVIFLF), 401–421 (VGTASLGLFLSSTFPSMLAYT), 434–454 (VLVTGAGIGEMVLQMLVGLIF), and 462–482 (FLVCGVIFGCLAFIFYILLLF).

It belongs to the major facilitator superfamily.

It is found in the membrane. This chain is Major facilitator superfamily domain-containing protein 4A, found in Mus musculus (Mouse).